A 101-amino-acid polypeptide reads, in one-letter code: Small ribosomal subunit protein uS14 (101 aa).

This sequence belongs to the universal ribosomal protein uS14 family. Part of the 30S ribosomal subunit. Contacts proteins S3 and S10.

Its function is as follows. Binds 16S rRNA, required for the assembly of 30S particles and may also be responsible for determining the conformation of the 16S rRNA at the A site. The polypeptide is Small ribosomal subunit protein uS14 (Burkholderia lata (strain ATCC 17760 / DSM 23089 / LMG 22485 / NCIMB 9086 / R18194 / 383)).